The sequence spans 826 residues: Periplasmic nitrate reductase (826 aa).

Residues 1–32 (MSISRREFLKANAAVAAATAVGATLPVKIVEA) constitute a signal peptide (tat-type signal). In terms of domain architecture, 4Fe-4S Mo/W bis-MGD-type spans 39–95 (IKWDKAPCRFCGVGCSVLVGTDNGKVVATKGDPESPVNKGLNCIKGYFLSKIMYGKD). Residues Cys46, Cys49, Cys53, and Cys81 each coordinate [4Fe-4S] cluster. Residues Lys83, Gln150, Asn175, Cys179, 212 to 219 (WGANMAEM), 262 to 264 (QSD), Met372, Gln376, Asn482, 508 to 509 (SD), Lys531, Asp558, and 716 to 725 (TGRVLEHWHT) contribute to the Mo-bis(molybdopterin guanine dinucleotide) site. Substrate is bound at residue Phe792. 2 residues coordinate Mo-bis(molybdopterin guanine dinucleotide): Asn800 and Lys817.

Belongs to the prokaryotic molybdopterin-containing oxidoreductase family. NasA/NapA/NarB subfamily. As to quaternary structure, component of the periplasmic nitrate reductase NapAB complex composed of NapA and NapB. [4Fe-4S] cluster is required as a cofactor. Mo-bis(molybdopterin guanine dinucleotide) serves as cofactor. In terms of processing, predicted to be exported by the Tat system. The position of the signal peptide cleavage has not been experimentally proven.

It localises to the periplasm. The enzyme catalyses 2 Fe(II)-[cytochrome] + nitrate + 2 H(+) = 2 Fe(III)-[cytochrome] + nitrite + H2O. Its function is as follows. Catalytic subunit of the periplasmic nitrate reductase complex NapAB. Receives electrons from NapB and catalyzes the reduction of nitrate to nitrite. In Shewanella halifaxensis (strain HAW-EB4), this protein is Periplasmic nitrate reductase.